A 285-amino-acid chain; its full sequence is tRNA (cytidine(32)/guanosine(34)-2'-O)-methyltransferase (285 aa).

Gly-53, Trp-55, Asp-83, Asp-99, and Asp-124 together coordinate S-adenosyl-L-methionine. Lys-164 acts as the Proton acceptor in catalysis.

It belongs to the class I-like SAM-binding methyltransferase superfamily. RNA methyltransferase RlmE family. TRM7 subfamily.

It is found in the cytoplasm. It catalyses the reaction cytidine(32)/guanosine(34) in tRNA + 2 S-adenosyl-L-methionine = 2'-O-methylcytidine(32)/2'-O-methylguanosine(34) in tRNA + 2 S-adenosyl-L-homocysteine + 2 H(+). In terms of biological role, methylates the 2'-O-ribose of nucleotides at positions 32 and 34 of the tRNA anticodon loop of substrate tRNAs. Requires trm732 for methylation of the cytidine at position 32 of the anticodon loop of substrate tRNAs. Requires trm734 for methylation of the nucleotide at position 34 of the anticodon loop of substrate tRNAs. Methylates tRNA(Phe). This is tRNA (cytidine(32)/guanosine(34)-2'-O)-methyltransferase from Schizosaccharomyces pombe (strain 972 / ATCC 24843) (Fission yeast).